Here is a 510-residue protein sequence, read N- to C-terminus: Probable cytosol aminopeptidase (510 aa).

Residues Lys-272 and Asp-277 each contribute to the Mn(2+) site. The active site involves Lys-284. Mn(2+)-binding residues include Asp-296, Asp-355, and Glu-357. The active site involves Arg-359.

This sequence belongs to the peptidase M17 family. Mn(2+) serves as cofactor.

It localises to the cytoplasm. It carries out the reaction Release of an N-terminal amino acid, Xaa-|-Yaa-, in which Xaa is preferably Leu, but may be other amino acids including Pro although not Arg or Lys, and Yaa may be Pro. Amino acid amides and methyl esters are also readily hydrolyzed, but rates on arylamides are exceedingly low.. It catalyses the reaction Release of an N-terminal amino acid, preferentially leucine, but not glutamic or aspartic acids.. In terms of biological role, presumably involved in the processing and regular turnover of intracellular proteins. Catalyzes the removal of unsubstituted N-terminal amino acids from various peptides. This Synechococcus sp. (strain JA-3-3Ab) (Cyanobacteria bacterium Yellowstone A-Prime) protein is Probable cytosol aminopeptidase.